The sequence spans 427 residues: 3-phosphoshikimate 1-carboxyvinyltransferase (427 aa).

3-phosphoshikimate-binding residues include Lys-21, Ser-22, and Arg-26. Lys-21 provides a ligand contact to phosphoenolpyruvate. The phosphoenolpyruvate site is built by Gly-93 and Arg-121. Ser-166, Gln-168, Asp-314, and Lys-341 together coordinate 3-phosphoshikimate. Phosphoenolpyruvate is bound at residue Gln-168. The active-site Proton acceptor is the Asp-314. 2 residues coordinate phosphoenolpyruvate: Arg-345 and Arg-387.

The protein belongs to the EPSP synthase family. Monomer.

It localises to the cytoplasm. It catalyses the reaction 3-phosphoshikimate + phosphoenolpyruvate = 5-O-(1-carboxyvinyl)-3-phosphoshikimate + phosphate. It functions in the pathway metabolic intermediate biosynthesis; chorismate biosynthesis; chorismate from D-erythrose 4-phosphate and phosphoenolpyruvate: step 6/7. Catalyzes the transfer of the enolpyruvyl moiety of phosphoenolpyruvate (PEP) to the 5-hydroxyl of shikimate-3-phosphate (S3P) to produce enolpyruvyl shikimate-3-phosphate and inorganic phosphate. The chain is 3-phosphoshikimate 1-carboxyvinyltransferase from Alkaliphilus oremlandii (strain OhILAs) (Clostridium oremlandii (strain OhILAs)).